The chain runs to 66 residues: DNA gyrase inhibitor YacG (66 aa).

4 residues coordinate Zn(2+): C9, C12, C28, and C32. Positions 45–66 are disordered; that stretch reads HKIAGSEGSEDELYSGDLEPRH.

The protein belongs to the DNA gyrase inhibitor YacG family. As to quaternary structure, interacts with GyrB. The cofactor is Zn(2+).

Functionally, inhibits all the catalytic activities of DNA gyrase by preventing its interaction with DNA. Acts by binding directly to the C-terminal domain of GyrB, which probably disrupts DNA binding by the gyrase. This is DNA gyrase inhibitor YacG from Pseudomonas putida (strain ATCC 700007 / DSM 6899 / JCM 31910 / BCRC 17059 / LMG 24140 / F1).